Consider the following 129-residue polypeptide: Large ribosomal subunit protein bL17 (129 aa).

Belongs to the bacterial ribosomal protein bL17 family. In terms of assembly, part of the 50S ribosomal subunit. Contacts protein L32.

This is Large ribosomal subunit protein bL17 from Serratia proteamaculans (strain 568).